A 240-amino-acid chain; its full sequence is tRNA1(Val) (adenine(37)-N6)-methyltransferase (240 aa).

Belongs to the methyltransferase superfamily. tRNA (adenine-N(6)-)-methyltransferase family.

Its subcellular location is the cytoplasm. The catalysed reaction is adenosine(37) in tRNA1(Val) + S-adenosyl-L-methionine = N(6)-methyladenosine(37) in tRNA1(Val) + S-adenosyl-L-homocysteine + H(+). Functionally, specifically methylates the adenine in position 37 of tRNA(1)(Val) (anticodon cmo5UAC). The protein is tRNA1(Val) (adenine(37)-N6)-methyltransferase of Photobacterium profundum (strain SS9).